Here is a 947-residue protein sequence, read N- to C-terminus: DNA topoisomerase 1 (947 aa).

One can recognise a Toprim domain in the interval Arg-16–Thr-140. Glu-22 and Asp-109 together coordinate Mg(2+). Residues Asp-155 to Ser-614 form the Topo IA-type catalytic domain. An interaction with DNA region spans residues Ser-189–Gln-194. Residue Tyr-343 is the O-(5'-phospho-DNA)-tyrosine intermediate of the active site. Disordered stretches follow at residues Val-733–Leu-771, Lys-846–Asn-888, and Ala-910–Arg-947. Residues Arg-915–Ala-934 are compositionally biased toward basic residues.

Belongs to the type IA topoisomerase family. Monomer. Requires Mg(2+) as cofactor.

It carries out the reaction ATP-independent breakage of single-stranded DNA, followed by passage and rejoining.. In terms of biological role, releases the supercoiling and torsional tension of DNA, which is introduced during the DNA replication and transcription, by transiently cleaving and rejoining one strand of the DNA duplex. Introduces a single-strand break via transesterification at a target site in duplex DNA. The scissile phosphodiester is attacked by the catalytic tyrosine of the enzyme, resulting in the formation of a DNA-(5'-phosphotyrosyl)-enzyme intermediate and the expulsion of a 3'-OH DNA strand. The free DNA strand then undergoes passage around the unbroken strand, thus removing DNA supercoils. Finally, in the religation step, the DNA 3'-OH attacks the covalent intermediate to expel the active-site tyrosine and restore the DNA phosphodiester backbone. The polypeptide is DNA topoisomerase 1 (Mycobacterium leprae (strain TN)).